Consider the following 352-residue polypeptide: Rhodopsin, deep-sea form (352 aa).

Residues Met-1–Ala-36 are Extracellular-facing. N-linked (GlcNAc...) asparagine glycans are attached at residues Asn-2 and Asn-15. The chain crosses the membrane as a helical span at residues Tyr-37 to Val-61. Topologically, residues Thr-62–Asn-73 are cytoplasmic. A helical transmembrane segment spans residues Tyr-74 to Ser-98. Residues Met-99 to Glu-113 lie on the Extracellular side of the membrane. The cysteines at positions 110 and 187 are disulfide-linked. Residues Gly-114 to Ile-133 traverse the membrane as a helical segment. Over Glu-134 to His-152 the chain is Cytoplasmic. Residues Ala-153 to Ser-176 form a helical membrane-spanning segment. Topologically, residues Arg-177–Ser-202 are extracellular. Asn-200 is a glycosylation site (N-linked (GlcNAc...) asparagine). Residues Phe-203–Val-230 traverse the membrane as a helical segment. Topologically, residues Lys-231–Arg-252 are cytoplasmic. Residues Met-253 to Phe-276 traverse the membrane as a helical segment. At Thr-277–Gly-284 the chain is on the extracellular side. Residues Pro-285 to Leu-309 form a helical membrane-spanning segment. Lys-296 is modified (N6-(retinylidene)lysine). At Asn-310–Ala-352 the chain is on the cytoplasmic side. A lipid anchor (S-palmitoyl cysteine) is attached at Cys-323. Residues Gly-333–Ala-352 form a disordered region. Residues Ala-334–Ala-352 are compositionally biased toward low complexity.

Belongs to the G-protein coupled receptor 1 family. Opsin subfamily. Phosphorylated on some or all of the serine and threonine residues present in the C-terminal region. As to expression, rod shaped photoreceptor cells which mediates vision in dim light.

It is found in the membrane. In terms of biological role, visual pigments such as rhodopsin and porphyropsin are light-absorbing molecules that mediate vision. Rhodopsin consists of an apoprotein, opsin, covalently linked to 11-cis-retinal. This receptor is coupled to the activation of phospholipase C. Porphyropsin consists of opsin covalently linked to 11-cis 3,4-didehydroretinal. The protein is Rhodopsin, deep-sea form of Anguilla anguilla (European freshwater eel).